A 114-amino-acid polypeptide reads, in one-letter code: uncharacterized protein (114 aa).

A helical transmembrane segment spans residues 13-30; sequence LYISAAGIASIYVVKTIV.

The protein resides in the mitochondrion outer membrane. This is an uncharacterized protein from Saccharomyces cerevisiae (strain ATCC 204508 / S288c) (Baker's yeast).